A 152-amino-acid chain; its full sequence is Lipoprotein signal peptidase (152 aa).

Transmembrane regions (helical) follow at residues 55–75 and 85–105; these read NKMW…VFYM and LGIS…DRVF. Residues Asp111 and Asp129 contribute to the active site. The helical transmembrane segment at 124–144 threads the bilayer; it reads VFNIADSALCIGVVLIIIQTL.

It belongs to the peptidase A8 family.

It is found in the cell membrane. The catalysed reaction is Release of signal peptides from bacterial membrane prolipoproteins. Hydrolyzes -Xaa-Yaa-Zaa-|-(S,diacylglyceryl)Cys-, in which Xaa is hydrophobic (preferably Leu), and Yaa (Ala or Ser) and Zaa (Gly or Ala) have small, neutral side chains.. It functions in the pathway protein modification; lipoprotein biosynthesis (signal peptide cleavage). This protein specifically catalyzes the removal of signal peptides from prolipoproteins. This is Lipoprotein signal peptidase from Bacillus cytotoxicus (strain DSM 22905 / CIP 110041 / 391-98 / NVH 391-98).